Here is a 279-residue protein sequence, read N- to C-terminus: Very long chain fatty acid elongase 1 (279 aa).

Residue Met1 is modified to N-acetylmethionine. The next 7 helical transmembrane spans lie at 23 to 43 (PLMG…YFVL), 61 to 81 (FMIV…YEFL), 110 to 130 (VAWL…IFIL), 137 to 154 (VTFL…SWWW), 176 to 196 (VIMY…PYLW), 201 to 221 (MTAI…QYYF), and 231 to 251 (VIIH…SNFW). A Di-lysine motif motif is present at residues 275 to 279 (KVKAN).

The protein belongs to the ELO family. ELOVL1 subfamily. As to quaternary structure, interacts with LASS2 and HSD17B12. Interacts with TECR. Ubiquitous.

The protein localises to the endoplasmic reticulum membrane. The enzyme catalyses a very-long-chain acyl-CoA + malonyl-CoA + H(+) = a very-long-chain 3-oxoacyl-CoA + CO2 + CoA. It carries out the reaction eicosanoyl-CoA + malonyl-CoA + H(+) = 3-oxodocosanoyl-CoA + CO2 + CoA. The catalysed reaction is (11Z)-eicosenoyl-CoA + malonyl-CoA + H(+) = 3-oxo-(13Z)-docosenoyl-CoA + CO2 + CoA. It catalyses the reaction docosanoyl-CoA + malonyl-CoA + H(+) = 3-oxotetracosanoyl-CoA + CO2 + CoA. The enzyme catalyses (13Z)-docosenoyl-CoA + malonyl-CoA + H(+) = 3-oxo-(15Z)-tetracosenoyl-CoA + CO2 + CoA. It carries out the reaction tetracosanoyl-CoA + malonyl-CoA + H(+) = 3-oxohexacosanoyl-CoA + CO2 + CoA. The catalysed reaction is hexacosanoyl-CoA + malonyl-CoA + H(+) = 3-oxooctacosanyol-CoA + CO2 + CoA. It catalyses the reaction octadecanoyl-CoA + malonyl-CoA + H(+) = 3-oxoeicosanoyl-CoA + CO2 + CoA. It participates in lipid metabolism; fatty acid biosynthesis. Catalyzes the first and rate-limiting reaction of the four reactions that constitute the long-chain fatty acids elongation cycle. This endoplasmic reticulum-bound enzymatic process allows the addition of 2 carbons to the chain of long- and very long-chain fatty acids (VLCFAs) per cycle. Condensing enzyme that exhibits activity toward saturated and monounsaturated acyl-CoA substrates, with the highest activity towards C22:0 acyl-CoA. May participate in the production of both saturated and monounsaturated VLCFAs of different chain lengths that are involved in multiple biological processes as precursors of membrane lipids and lipid mediators. Important for saturated C24:0 and monounsaturated C24:1 sphingolipid synthesis. Indirectly inhibits RPE65 via production of VLCFAs. In Homo sapiens (Human), this protein is Very long chain fatty acid elongase 1.